Reading from the N-terminus, the 143-residue chain is Small ribosomal subunit protein uS11c (143 aa).

The protein belongs to the universal ribosomal protein uS11 family. Part of the 30S ribosomal subunit.

The protein localises to the plastid. Its subcellular location is the chloroplast. This is Small ribosomal subunit protein uS11c from Brachypodium distachyon (Purple false brome).